Reading from the N-terminus, the 421-residue chain is MQYEAYQWGQSHPTSTSGSMLQDTPTAASQPVKRHAACDECRKRKLKCSGEISGCSRCIKQSLSCHYSVQKQMGRPPKKRLREDNDDISLLNIPDNDPWANSQIAHVPDFGAAIADVSEEPQILSSTHLSPYSFPYRLSTDEDHRHTWQLAPNESMSSIPATTTPWPDFSSVSAAAPKPFIMPPGLTPPIMPSTDSSPDQECSCLSYLYLCLSHLSSLKPFPISQHTICSLYISAKTAQSVIRCQSCPNRFDTGLQNVMFTGTLLNVIADSWLRVSRAEACELGNQVAPPAYAAKMNRSPDLRGAWNDYLRQLVRFSVIRGPMDIDAQTPCAQQAPSVLDLVEEMEARQRRWHESPDSHPLPPDQRLNIPSDQNCLNRDEQDLLCIRVAKSARNVIAKFGFQSDEYPESVPSLSPDSSISP.

The tract at residues 1–29 is disordered; that stretch reads MQYEAYQWGQSHPTSTSGSMLQDTPTAAS. Over residues 8 to 29 the composition is skewed to polar residues; it reads WGQSHPTSTSGSMLQDTPTAAS. Residues 38-65 constitute a DNA-binding region (zn(2)-C6 fungal-type); sequence CDECRKRKLKCSGEISGCSRCIKQSLSC. Positions 346-357 are enriched in basic and acidic residues; it reads EARQRRWHESPD. Residues 346 to 371 are disordered; sequence EARQRRWHESPDSHPLPPDQRLNIPS.

The protein localises to the nucleus. Its function is as follows. Transcription factor that is important for oxidative stress resistance and essential for gliotoxin (GT) self-protection through the regulation of a gene encoding a putative gliT homolog, even if E.nidulans does not produce gliotoxin itself. The sequence is that of Transcription factor rglT from Emericella nidulans (strain FGSC A4 / ATCC 38163 / CBS 112.46 / NRRL 194 / M139) (Aspergillus nidulans).